We begin with the raw amino-acid sequence, 133 residues long: Brain natriuretic peptide (133 aa).

The first 22 residues, 1–22, serve as a signal peptide directing secretion; the sequence is MVVSFVSICGLLLIFNLPLSTS. Residues 44 to 53 are compositionally biased toward acidic residues; it reads SMSEETEEDQ. Disordered stretches follow at residues 44–76 and 93–112; these read SMSEETEEDQMVPANSESLEPVGSMKQTANRDQ and TRKNVQNDSSRRSSSCFGRR. Cys-108 and Cys-124 form a disulfide bridge.

The protein belongs to the natriuretic peptide family.

It is found in the secreted. In terms of biological role, cardiac hormone which may function as a paracrine antifibrotic factor in the heart. Also plays a key role in cardiovascular homeostasis through natriuresis, diuresis, vasorelaxation, and inhibition of renin and aldosterone secretion. Has a cGMP-stimulating activity. The protein is Brain natriuretic peptide (nppb) of Takifugu rubripes (Japanese pufferfish).